Here is a 345-residue protein sequence, read N- to C-terminus: Sulfate/thiosulfate import ATP-binding protein CysA (345 aa).

An ABC transporter domain is found at 3-237 (IQVSGLCKHF…PRTEFVYQFV (235 aa)). An ATP-binding site is contributed by 35–42 (GPSGCGKT).

The protein belongs to the ABC transporter superfamily. Sulfate/tungstate importer (TC 3.A.1.6) family. In terms of assembly, the complex is composed of two ATP-binding proteins (CysA), two transmembrane proteins (CysT and CysW) and a solute-binding protein (CysP).

The protein resides in the cell inner membrane. It carries out the reaction sulfate(out) + ATP + H2O = sulfate(in) + ADP + phosphate + H(+). It catalyses the reaction thiosulfate(out) + ATP + H2O = thiosulfate(in) + ADP + phosphate + H(+). Functionally, part of the ABC transporter complex CysAWTP involved in sulfate/thiosulfate import. Responsible for energy coupling to the transport system. The chain is Sulfate/thiosulfate import ATP-binding protein CysA from Vibrio vulnificus (strain CMCP6).